A 166-amino-acid chain; its full sequence is Phospholipase A2 inhibitor A4/A5 (166 aa).

Residues 1-19 (MRLILLSGLLLLGTFLVNG) form the signal peptide. Residues 46–161 (LFHAFLTVHK…CDDNLLVVCE (116 aa)) enclose the C-type lectin domain. 2 disulfides stabilise this stretch: C83–C160 and C138–C152. N-linked (GlcNAc...) asparagine glycosylation is present at N122.

This sequence belongs to the alpha-type phospholipase A2 inhibitor family. Homotrimer; non-covalently linked. As to expression, expressed by the liver.

Its subcellular location is the secreted. This phospholipase A2 inhibitor binds directly phospholipase A2 in the presence or absence of calcium. This Crotalus durissus terrificus (South American rattlesnake) protein is Phospholipase A2 inhibitor A4/A5.